We begin with the raw amino-acid sequence, 591 residues long: CTP synthase 1 (591 aa).

An N6-acetyllysine modification is found at K100. The Glutamine amidotransferase type-1 domain occupies 300–554 (SIALVGKYTK…LASVGRLSHY (255 aa)). Residues C399, H526, and E528 each act as for GATase activity in the active site. 8 positions are modified to phosphoserine: S562, S568, S571, S573, S574, S575, S578, and S587. A disordered region spans residues 562–591 (SPRDTYSDRSGSSSPDSEITELKFPSINHD). Low complexity predominate over residues 569-578 (DRSGSSSPDS).

Belongs to the CTP synthase family. In terms of tissue distribution, widely expressed.

The protein resides in the cytoplasm. It is found in the cytosol. It catalyses the reaction UTP + L-glutamine + ATP + H2O = CTP + L-glutamate + ADP + phosphate + 2 H(+). Its pathway is pyrimidine metabolism; CTP biosynthesis via de novo pathway; CTP from UDP: step 2/2. Activated by GTP and inhibited by CTP. This enzyme is involved in the de novo synthesis of CTP, a precursor of DNA, RNA and phospholipids. Catalyzes the ATP-dependent amination of UTP to CTP with either L-glutamine or ammonia as a source of nitrogen. This enzyme and its product, CTP, play a crucial role in the proliferation of activated lymphocytes and therefore in immunity. The polypeptide is CTP synthase 1 (Homo sapiens (Human)).